The following is a 150-amino-acid chain: Large ribosomal subunit protein uL13 (150 aa).

The protein belongs to the universal ribosomal protein uL13 family. In terms of assembly, part of the 50S ribosomal subunit.

This protein is one of the early assembly proteins of the 50S ribosomal subunit, although it is not seen to bind rRNA by itself. It is important during the early stages of 50S assembly. The chain is Large ribosomal subunit protein uL13 from Chlorobaculum parvum (strain DSM 263 / NCIMB 8327) (Chlorobium vibrioforme subsp. thiosulfatophilum).